A 219-amino-acid polypeptide reads, in one-letter code: Thiopurine S-methyltransferase (219 aa).

Residues tryptophan 10, leucine 45, glutamate 66, and arginine 123 each contribute to the S-adenosyl-L-methionine site.

This sequence belongs to the class I-like SAM-binding methyltransferase superfamily. TPMT family.

It localises to the cytoplasm. The enzyme catalyses S-adenosyl-L-methionine + a thiopurine = S-adenosyl-L-homocysteine + a thiopurine S-methylether.. This Bordetella pertussis (strain Tohama I / ATCC BAA-589 / NCTC 13251) protein is Thiopurine S-methyltransferase.